We begin with the raw amino-acid sequence, 178 residues long: uncharacterized protein (178 aa).

This is an uncharacterized protein from Saccharolobus islandicus (Sulfolobus islandicus).